A 357-amino-acid polypeptide reads, in one-letter code: DNA replication and repair protein RecF (357 aa).

ATP is bound at residue 30-37 (GANGSGKT).

It belongs to the RecF family.

The protein localises to the cytoplasm. The RecF protein is involved in DNA metabolism; it is required for DNA replication and normal SOS inducibility. RecF binds preferentially to single-stranded, linear DNA. It also seems to bind ATP. This is DNA replication and repair protein RecF from Salmonella paratyphi A (strain ATCC 9150 / SARB42).